Consider the following 276-residue polypeptide: MPELPEVEVTRRGIEPFVAGRRVERVDVRTAMLRWPVPADFAEMLRSREVLGVERRGKYLLFEVDAGWFIVHLGMTGTLRVLPNDAPPPAPAKHDHVDWVFDEFVLRFRDPRRFGAVLWHPRDAGDVRAHPLLASLGVEPFSAAFSGALLFKRTRGRTVSVKQALLAGDIVVGVGNIYASESLFRAGIRPTTAAGRVSLPRYERLADAVRATLADAIERGGSTLRDFVGSNGESGYFQLDCFVYDRAGEPCRVCGAPIRQIVQGQRSTYYCPNCQR.

Pro2 (schiff-base intermediate with DNA) is an active-site residue. Glu3 acts as the Proton donor in catalysis. Lys58 functions as the Proton donor; for beta-elimination activity in the catalytic mechanism. His94, Arg112, and Arg157 together coordinate DNA. The segment at 242 to 276 (FVYDRAGEPCRVCGAPIRQIVQGQRSTYYCPNCQR) adopts an FPG-type zinc-finger fold. Arg266 (proton donor; for delta-elimination activity) is an active-site residue.

It belongs to the FPG family. As to quaternary structure, monomer. Zn(2+) serves as cofactor.

It carries out the reaction Hydrolysis of DNA containing ring-opened 7-methylguanine residues, releasing 2,6-diamino-4-hydroxy-5-(N-methyl)formamidopyrimidine.. It catalyses the reaction 2'-deoxyribonucleotide-(2'-deoxyribose 5'-phosphate)-2'-deoxyribonucleotide-DNA = a 3'-end 2'-deoxyribonucleotide-(2,3-dehydro-2,3-deoxyribose 5'-phosphate)-DNA + a 5'-end 5'-phospho-2'-deoxyribonucleoside-DNA + H(+). Functionally, involved in base excision repair of DNA damaged by oxidation or by mutagenic agents. Acts as a DNA glycosylase that recognizes and removes damaged bases. Has a preference for oxidized purines, such as 7,8-dihydro-8-oxoguanine (8-oxoG). Has AP (apurinic/apyrimidinic) lyase activity and introduces nicks in the DNA strand. Cleaves the DNA backbone by beta-delta elimination to generate a single-strand break at the site of the removed base with both 3'- and 5'-phosphates. The protein is Formamidopyrimidine-DNA glycosylase of Burkholderia thailandensis (strain ATCC 700388 / DSM 13276 / CCUG 48851 / CIP 106301 / E264).